The following is a 157-amino-acid chain: Endoribonuclease YbeY (157 aa).

His114, His118, and His124 together coordinate Zn(2+).

This sequence belongs to the endoribonuclease YbeY family. Requires Zn(2+) as cofactor.

It is found in the cytoplasm. Its function is as follows. Single strand-specific metallo-endoribonuclease involved in late-stage 70S ribosome quality control and in maturation of the 3' terminus of the 16S rRNA. The protein is Endoribonuclease YbeY of Salmonella paratyphi A (strain AKU_12601).